The chain runs to 367 residues: Anhydro-N-acetylmuramic acid kinase (367 aa).

10–17 is an ATP binding site; the sequence is GTSLDGVD.

Belongs to the anhydro-N-acetylmuramic acid kinase family.

The catalysed reaction is 1,6-anhydro-N-acetyl-beta-muramate + ATP + H2O = N-acetyl-D-muramate 6-phosphate + ADP + H(+). It participates in amino-sugar metabolism; 1,6-anhydro-N-acetylmuramate degradation. It functions in the pathway cell wall biogenesis; peptidoglycan recycling. In terms of biological role, catalyzes the specific phosphorylation of 1,6-anhydro-N-acetylmuramic acid (anhMurNAc) with the simultaneous cleavage of the 1,6-anhydro ring, generating MurNAc-6-P. Is required for the utilization of anhMurNAc either imported from the medium or derived from its own cell wall murein, and thus plays a role in cell wall recycling. This is Anhydro-N-acetylmuramic acid kinase from Aliivibrio fischeri (strain ATCC 700601 / ES114) (Vibrio fischeri).